The sequence spans 174 residues: MMQLMLYASTLITSIILFKMNHPLAMGLMLLIQTIQISMLTGLMAKSFWFSYILFLIFLGGMLVLFIYVTSLASNEMFSLSMKLTTISLFIFSMILIINILLDKSSISFFIQNNEMQSIYNLNMFLQENSLNLQKLYNYPTNLMTILLMNYLLITLIAVVKITKLFYGPLRPMN.

Transmembrane regions (helical) follow at residues 24 to 44, 48 to 68, 82 to 102, and 143 to 163; these read LAMG…TGLM, FWFS…LFIY, MKLT…NILL, and LMTI…VKIT.

The protein belongs to the complex I subunit 6 family.

Its subcellular location is the mitochondrion membrane. The enzyme catalyses a ubiquinone + NADH + 5 H(+)(in) = a ubiquinol + NAD(+) + 4 H(+)(out). Functionally, core subunit of the mitochondrial membrane respiratory chain NADH dehydrogenase (Complex I) that is believed to belong to the minimal assembly required for catalysis. Complex I functions in the transfer of electrons from NADH to the respiratory chain. The immediate electron acceptor for the enzyme is believed to be ubiquinone. The sequence is that of NADH-ubiquinone oxidoreductase chain 6 (ND6) from Ceratitis capitata (Mediterranean fruit fly).